Reading from the N-terminus, the 447-residue chain is GTPase Der (447 aa).

EngA-type G domains are found at residues 4-165 (KIIA…PEEE) and 180-357 (LQIV…KIWN). GTP contacts are provided by residues 10 to 17 (GRPNVGKS), 57 to 61 (DTPGL), 119 to 122 (NKCE), 186 to 193 (GRPNAGKS), 233 to 237 (DTAGL), and 298 to 301 (NKWD). The region spanning 358 to 443 (KKIATSKLNE…PIRFTYVKTK (86 aa)) is the KH-like domain.

The protein belongs to the TRAFAC class TrmE-Era-EngA-EngB-Septin-like GTPase superfamily. EngA (Der) GTPase family. In terms of assembly, associates with the 50S ribosomal subunit.

GTPase that plays an essential role in the late steps of ribosome biogenesis. The sequence is that of GTPase Der from Rickettsia akari (strain Hartford).